The primary structure comprises 464 residues: V-type ATP synthase beta chain (464 aa).

It belongs to the ATPase alpha/beta chains family.

Its function is as follows. Produces ATP from ADP in the presence of a proton gradient across the membrane. The V-type beta chain is a regulatory subunit. The chain is V-type ATP synthase beta chain from Streptococcus sanguinis (strain SK36).